The sequence spans 230 residues: 5'-methylthioadenosine/S-adenosylhomocysteine nucleosidase (230 aa).

The active-site Proton acceptor is the E12. Substrate-binding positions include G78, I153, and 174–175; that span reads ME. D198 acts as the Proton donor in catalysis.

It belongs to the PNP/UDP phosphorylase family. MtnN subfamily.

It carries out the reaction S-adenosyl-L-homocysteine + H2O = S-(5-deoxy-D-ribos-5-yl)-L-homocysteine + adenine. The enzyme catalyses S-methyl-5'-thioadenosine + H2O = 5-(methylsulfanyl)-D-ribose + adenine. It catalyses the reaction 5'-deoxyadenosine + H2O = 5-deoxy-D-ribose + adenine. The protein operates within amino-acid biosynthesis; L-methionine biosynthesis via salvage pathway; S-methyl-5-thio-alpha-D-ribose 1-phosphate from S-methyl-5'-thioadenosine (hydrolase route): step 1/2. Catalyzes the irreversible cleavage of the glycosidic bond in both 5'-methylthioadenosine (MTA) and S-adenosylhomocysteine (SAH/AdoHcy) to adenine and the corresponding thioribose, 5'-methylthioribose and S-ribosylhomocysteine, respectively. Also cleaves 5'-deoxyadenosine, a toxic by-product of radical S-adenosylmethionine (SAM) enzymes, into 5-deoxyribose and adenine. The polypeptide is 5'-methylthioadenosine/S-adenosylhomocysteine nucleosidase (Shewanella sediminis (strain HAW-EB3)).